An 863-amino-acid chain; its full sequence is Facilitated trehalose transporter Tret1 (863 aa).

The interval 1-208 (MSGRDNRGAG…RIGFQQQKAT (208 aa)) is disordered. Residues 1-398 (MSGRDNRGAG…VYRPTTNPIY (398 aa)) lie on the Cytoplasmic side of the membrane. Positions 28 to 46 (KLKEKLTRAGEELGYHRVE) are enriched in basic and acidic residues. The span at 47-59 (SNLSASNTGTSLD) shows a compositional bias: polar residues. The segment covering 72-85 (AAPQRHPQQQFPHL) has biased composition (low complexity). Polar residues-rich tracts occupy residues 114-129 (PPQQ…RSSG) and 177-187 (KPQQQGNNKAA). Serine 254, serine 255, and serine 256 each carry phosphoserine. Residues 286-307 (VLQGSSTDSDEEGDDAEHKRLI) form a disordered region. Phosphoserine occurs at positions 326 and 328. Residues 332-354 (FLTSRQNFQQQRSISTDSRKSRR) are disordered. The segment covering 336-347 (RQNFQQQRSIST) has biased composition (polar residues). A helical membrane pass occupies residues 399–419 (IWTQVLAALSVSLGSLVVGFA). The Extracellular segment spans residues 420 to 446 (SAYTSPALVSMTNTNLTSFVVTPQAAS). Asparagine 434 carries N-linked (GlcNAc...) asparagine glycosylation. The chain crosses the membrane as a helical span at residues 447–467 (WVGGIMPLAGLAGGIAGGPFI). Over 468–479 (EYLGRRNTILAT) the chain is Cytoplasmic. A helical membrane pass occupies residues 480 to 500 (AVPFIISWLLIACAVNVVMVL). Over 501–503 (CGR) the chain is Extracellular. A helical transmembrane segment spans residues 504-524 (FLAGFCVGIASLSLPVYLGET). Over 525-530 (VQPEVR) the chain is Cytoplasmic. Residues 531 to 551 (GTLGLLPTAFGNIGILLCFVA) form a helical membrane-spanning segment. Residues 552–558 (GTYMDWS) lie on the Extracellular side of the membrane. A helical transmembrane segment spans residues 559–579 (MLAFLGGTLPVPFLILMFLIP). Residues 580–642 (ETPRWYVSRG…ELLKRSNLKP (63 aa)) lie on the Cytoplasmic side of the membrane. The helical transmembrane segment at 643–663 (LSISLGLMFFQQLSGINAVIF) threads the bilayer. The Extracellular portion of the chain corresponds to 664–679 (YTVQIFQDAGSTIDGN). A helical membrane pass occupies residues 680–700 (VCTIIVGVVNFMATFIATVLI). Residues 701 to 706 (DRAGRK) are Cytoplasmic-facing. The helical transmembrane segment at 707–727 (ILLYVSNVAMILTLFVLGGFF) threads the bilayer. Residues 728–746 (YCKSTGMDTSNVGWLPLSC) lie on the Extracellular side of the membrane. The chain crosses the membrane as a helical span at residues 747–767 (FVVYILGFSLGFGPIPWLMMG). Topologically, residues 768 to 773 (EILPAK) are cytoplasmic. A helical transmembrane segment spans residues 774–794 (IRGSAASVATAFNWSCTFVVT). The Extracellular portion of the chain corresponds to 795-807 (KSFQDMIDVMGAH). Residues 808–828 (GAFWMFGAICFVGLFFVIFYV) form a helical membrane-spanning segment. Residues 829 to 863 (PETQGKTLEDIERKMMGRVRRMSSVANIKPLSFNM) are Cytoplasmic-facing. Residues serine 851 and serine 852 each carry the phosphoserine modification.

Belongs to the major facilitator superfamily. Sugar transporter (TC 2.A.1.1) family. Trehalose transporter subfamily.

It localises to the cell membrane. Functionally, low-capacity facilitative transporter for trehalose. Does not transport maltose, sucrose or lactose. Mediates the bidirectional transfer of trehalose. Responsible for the transport of trehalose synthesized in the fat body and the incorporation of trehalose into other tissues that require a carbon source, thereby regulating trehalose levels in the hemolymph. This is Facilitated trehalose transporter Tret1 from Drosophila mojavensis (Fruit fly).